A 93-amino-acid polypeptide reads, in one-letter code: Phosphoribosyl-ATP pyrophosphatase (93 aa).

Belongs to the PRA-PH family.

It localises to the cytoplasm. The enzyme catalyses 1-(5-phospho-beta-D-ribosyl)-ATP + H2O = 1-(5-phospho-beta-D-ribosyl)-5'-AMP + diphosphate + H(+). The protein operates within amino-acid biosynthesis; L-histidine biosynthesis; L-histidine from 5-phospho-alpha-D-ribose 1-diphosphate: step 2/9. This Mycolicibacterium smegmatis (strain ATCC 700084 / mc(2)155) (Mycobacterium smegmatis) protein is Phosphoribosyl-ATP pyrophosphatase.